A 260-amino-acid polypeptide reads, in one-letter code: Flap endonuclease Xni (260 aa).

D109 provides a ligand contact to Mg(2+). The region spanning 165 to 259 (VKPSQLADYW…DIRFTGPNKA (95 aa)) is the 5'-3' exonuclease domain. Residues L176, P185, V187, and V190 each coordinate K(+). Residues 189-194 (GVGPKA) are interaction with DNA.

Belongs to the Xni family. It depends on Mg(2+) as a cofactor. K(+) is required as a cofactor.

Has flap endonuclease activity. During DNA replication, flap endonucleases cleave the 5'-overhanging flap structure that is generated by displacement synthesis when DNA polymerase encounters the 5'-end of a downstream Okazaki fragment. In Vibrio campbellii (strain ATCC BAA-1116), this protein is Flap endonuclease Xni.